We begin with the raw amino-acid sequence, 105 residues long: Urease subunit beta (105 aa).

The protein belongs to the urease beta subunit family. As to quaternary structure, heterotrimer of UreA (gamma), UreB (beta) and UreC (alpha) subunits. Three heterotrimers associate to form the active enzyme.

The protein resides in the cytoplasm. The enzyme catalyses urea + 2 H2O + H(+) = hydrogencarbonate + 2 NH4(+). The protein operates within nitrogen metabolism; urea degradation; CO(2) and NH(3) from urea (urease route): step 1/1. The polypeptide is Urease subunit beta (Mycobacterium sp. (strain JLS)).